The primary structure comprises 101 residues: Large ribosomal subunit protein bL21 (101 aa).

This sequence belongs to the bacterial ribosomal protein bL21 family. In terms of assembly, part of the 50S ribosomal subunit. Contacts protein L20.

Its function is as follows. This protein binds to 23S rRNA in the presence of protein L20. The sequence is that of Large ribosomal subunit protein bL21 from Corynebacterium efficiens (strain DSM 44549 / YS-314 / AJ 12310 / JCM 11189 / NBRC 100395).